A 76-amino-acid polypeptide reads, in one-letter code: Putative snRNP Sm-like protein (76 aa).

The 73-residue stretch at 4–76 folds into the Sm domain; sequence RPLDVIHKSL…VLAISPTEEG (73 aa).

Belongs to the snRNP Sm proteins family.

This chain is Putative snRNP Sm-like protein, found in Pyrococcus furiosus (strain ATCC 43587 / DSM 3638 / JCM 8422 / Vc1).